The chain runs to 413 residues: MQESIIQWHGATNTRVPFGIYTDTANADQEQQRIYRGEVWNYLCLESEIPGAGDFRTTFAGETPIVVVRDADQEIYAFENRCAHRGALIALEKSGRTDSFQCVYHAWSYNRQGDLTGVAFEKGVKGQGGMPASFCKEEHGPRKLRVAVFCGLVFGSFSEDVPSIEDYLGPEICERIERVLHKPVEVIGRFTQKLPNNWKLYFENVKDSYHASLLHMFFTTFELNRLSQKGGVIVDESGGHHVSYSMIDRGAKDDSYKDQAIRSDNERYRLKDPSLLEGFEEFEDGVTLQILSVFPGFVLQQIQNSIAVRQLLPKSISSSELNWTYLGYADDSAEQRKVRLKQANLIGPAGFISMEDGAVGGFVQRGIAGAANLDAVIEMGGDHEGSSEGRATETSVRGFWKAYRKHMGQEMQA.

Residues 41 to 144 (NYLCLESEIP…CKEEHGPRKL (104 aa)) enclose the Rieske domain. The [2Fe-2S] cluster site is built by C82, H84, C102, and H105.

This sequence belongs to the bacterial ring-hydroxylating dioxygenase alpha subunit family. Heterotetramer composed of 2 alpha (TphA2I and TphA2II) and 2 beta (TphA3I and TphA3II) subunits. Part of a multicomponent enzyme system composed of a reductase (TphA1I or TphA1II) and a two-subunit oxygenase component (TphA2I or TphA2II and TphA3I or TphA3II). Requires Fe cation as cofactor. It depends on [2Fe-2S] cluster as a cofactor.

It catalyses the reaction terephthalate + NADH + O2 + H(+) = (3S,4R)-3,4-dihydroxycyclohexa-1,5-diene-1,4-dicarboxylate + NAD(+). With respect to regulation, inhibited by EDTA. Functionally, component of the terephthalate 1,2-dioxygenase multicomponent enzyme system which catalyzes the dioxygenation of terephthalate (TER/TPA) to 1,2-dihydroxy-3,5-cyclohexadiene-1,4-dicarboxylic acid (DCD). It can also use 2,5-dicarboxypyridine (PDC) and 1,4-napthalenedicarboxylic acid (NDC) as substrates, and preferentially uses NADPH which is the physiological electron donor. This is Terephthalate 1,2-dioxygenase, terminal oxygenase component subunit alpha 2 (tphA2II) from Comamonas sp.